Reading from the N-terminus, the 101-residue chain is DNA-binding protein Fis (101 aa).

Positions 77-96 (QTRAANMLGINRGTLRKKLK) form a DNA-binding region, H-T-H motif.

Belongs to the transcriptional regulatory Fis family. Homodimer.

Functionally, activates ribosomal RNA transcription. Plays a direct role in upstream activation of rRNA promoters. The sequence is that of DNA-binding protein Fis from Shewanella denitrificans (strain OS217 / ATCC BAA-1090 / DSM 15013).